Consider the following 199-residue polypeptide: Transcriptional regulatory protein DesR (199 aa).

The 115-residue stretch at 3-117 folds into the Response regulatory domain; the sequence is SIFIAEDQQM…ELANAIRSVM (115 aa). Aspartate 54 carries the 4-aspartylphosphate modification. The HTH luxR-type domain maps to 131-196; that stretch reads LYSEANPLTD…EAITRSKEKG (66 aa). Residues 155–174 constitute a DNA-binding region (H-T-H motif); that stretch reads TKEIAQELSIKSGTVRNYIS.

In terms of processing, phosphorylated by DesK.

It localises to the cytoplasm. Member of the two-component regulatory system DesR/DesK, responsible for cold induction of the des gene coding for the Delta5 acyl-lipid desaturase. The sequence is that of Transcriptional regulatory protein DesR (desR) from Bacillus subtilis (strain 168).